A 590-amino-acid chain; its full sequence is Acyl-CoA ligase sidI (590 aa).

The PTS2-type peroxisomal targeting signal motif lies at arginine 6–leucine 14. ATP-binding positions include threonine 220–lysine 228, serine 359–threonine 364, aspartate 449, and arginine 464. Threonine 364 contacts substrate. Residues glycine 472–glutamate 474 and tyrosine 543–phenylalanine 545 each bind CoA. Lysine 563 is a binding site for ATP.

Belongs to the ATP-dependent AMP-binding enzyme family.

Its subcellular location is the peroxisome. Its pathway is siderophore biosynthesis. In terms of biological role, acyl-CoA ligase; part of the siderophore biosynthetic pathway. Aspergillus fumigatus produces 4 types of siderophores, low-molecular-mass iron chelators, including excreted fusarinine C (FsC) and triacetylfusarinine C (TAFC) for iron uptake and intacellular ferricrocin (FC) for hyphal and hydroxyferricrocin (HFC) for conidial iron distribution and storage. TAFC consists of 3 N(2)-acetyl-N(5)-anhydromevalonyl-N(5)-hydroxyornithine residues cyclically linked by ester bonds; FC is a cyclic hexapeptide with the structure Gly-Ser-Gly-(N(5)-acetyl-N(5)-hydroxyornithine)x3. The biosynthesis of all four siderophores depends on the hydroxylation of ornithine, catalyzed by the monooxygenase sidA. Subsequently, the pathways for biosynthesis of extra- and intracellular siderophores split. For biosynthesis of extracellular siderophores, the transacylase sidF transfers anhydromevalonyl to N(5)-hydroxyornithine. The required anhydromevalonyl-CoA moiety is derived from mevalonate by CoA ligation and dehydration catalyzed by sidI and sidH respectively. The acetylation of N(5)-hydroxyornithine for FC biosynthesis involves the constitutively expressed sidL. FC is hydroxylated to HFC by an as yet uncharacterized enzyme during conidiation. Assembly of fusarinine C (FsC) and FC is catalyzed by two different nonribosomal peptide synthetases (NRPS), sidD and sidC respectively. Subsequently, sidG catalyzes N2-acetylation of FsC for forming TAFC. Both extra- and intracellular siderophores are crucial for growth during iron limitation and virulence. This is Acyl-CoA ligase sidI from Aspergillus fumigatus (strain ATCC MYA-4609 / CBS 101355 / FGSC A1100 / Af293) (Neosartorya fumigata).